The primary structure comprises 258 residues: MKRIAMLAAACVIAVPAFAQNVATVNGKPITQKSLDEFVKLVVSQGATDSPQLREQIKQEMINRQVFVQAAEKDGVAKQADVQTEIELARQGILVRALMADYLQKHPVTDAQVKAEYEKIKKEQAGKMEYKVRHILVEDEKTANDLLAQVKSNKSKFDDLAKKNSKDPGSAERGGDLGWAPATNYVQPFAEAVTKLKKGQLVDKPVQTQFGWHVIQVDDTRPVEFPAMDQVRPQLEEMLRQQTLANYQKQLREQAKIQ.

An N-terminal signal peptide occupies residues 1–19 (MKRIAMLAAACVIAVPAFA). The PpiC domain maps to 127-219 (KMEYKVRHIL…FGWHVIQVDD (93 aa)). The span at 158-175 (DDLAKKNSKDPGSAERGG) shows a compositional bias: basic and acidic residues. Residues 158–178 (DDLAKKNSKDPGSAERGGDLG) form a disordered region.

The protein belongs to the PpiC/parvulin rotamase family.

It carries out the reaction [protein]-peptidylproline (omega=180) = [protein]-peptidylproline (omega=0). The sequence is that of Probable parvulin-type peptidyl-prolyl cis-trans isomerase from Bordetella bronchiseptica (strain ATCC BAA-588 / NCTC 13252 / RB50) (Alcaligenes bronchisepticus).